The chain runs to 727 residues: NADH-ubiquinone oxidoreductase 75 kDa subunit, mitochondrial (727 aa).

Residues 1–23 (MLRIPVRKALVVLSKSPKGCVRT) constitute a mitochondrion transit peptide. Residues 30–108 (NLIEVFVDGQ…GWNILTNSKK (79 aa)) form the 2Fe-2S ferredoxin-type domain. Cys-64, Cys-75, and Cys-78 together coordinate [2Fe-2S] cluster. The residue at position 84 (Lys-84) is an N6-acetyllysine. Cys-92 is a binding site for [2Fe-2S] cluster. Positions 108–147 (KSKKAREGVMEFLLANHPLDCPICDQGGECDLQDQSMMFG) constitute a 4Fe-4S His(Cys)3-ligated-type domain. Positions 124, 128, 131, 137, 176, 179, 182, and 226 each coordinate [4Fe-4S] cluster. In terms of domain architecture, 4Fe-4S Mo/W bis-MGD-type spans 245–301 (TRKTESIDVMDAVGSNIVVSTRTGEVMRILPRMHEDINEEWISDKTRFAYDGLKRQR). 3 positions are modified to N6-acetyllysine: Lys-467, Lys-499, and Lys-709.

This sequence belongs to the complex I 75 kDa subunit family. As to quaternary structure, core subunit of respiratory chain NADH dehydrogenase (Complex I) which is composed of 45 different subunits. This is the largest subunit of complex I and it is a component of the iron-sulfur (IP) fragment of the enzyme. Complex I associates with ubiquinol-cytochrome reductase complex (Complex III) to form supercomplexes. Interacts with MDM2 and AKAP1. Requires [2Fe-2S] cluster as cofactor. It depends on [4Fe-4S] cluster as a cofactor.

It is found in the mitochondrion inner membrane. The enzyme catalyses a ubiquinone + NADH + 5 H(+)(in) = a ubiquinol + NAD(+) + 4 H(+)(out). In terms of biological role, core subunit of the mitochondrial membrane respiratory chain NADH dehydrogenase (Complex I) which catalyzes electron transfer from NADH through the respiratory chain, using ubiquinone as an electron acceptor. Essential for catalysing the entry and efficient transfer of electrons within complex I. Plays a key role in the assembly and stability of complex I and participates in the association of complex I with ubiquinol-cytochrome reductase complex (Complex III) to form supercomplexes. This is NADH-ubiquinone oxidoreductase 75 kDa subunit, mitochondrial (NDUFS1) from Pan troglodytes (Chimpanzee).